The sequence spans 564 residues: CTP synthase (564 aa).

The amidoligase domain stretch occupies residues 1 to 265; it reads MTKFVFVTGG…DEIVCHRLGI (265 aa). Position 13 (Ser13) interacts with CTP. Ser13 is a UTP binding site. ATP-binding positions include 14 to 19 and Asp71; that span reads SLGKGI. Positions 71 and 139 each coordinate Mg(2+). Residues 146–148, 186–191, and Lys222 each bind CTP; these read DIE and KTKPTQ. UTP-binding positions include 186-191 and Lys222; that span reads KTKPTQ. Residues 290-543 enclose the Glutamine amidotransferase type-1 domain; sequence SIALVGKYVD…VRAAISFADK (254 aa). Gly351 lines the L-glutamine pocket. Cys378 serves as the catalytic Nucleophile; for glutamine hydrolysis. L-glutamine-binding positions include 379–382, Glu402, and Arg469; that span reads LGMQ. Catalysis depends on residues His516 and Glu518.

The protein belongs to the CTP synthase family. As to quaternary structure, homotetramer.

The enzyme catalyses UTP + L-glutamine + ATP + H2O = CTP + L-glutamate + ADP + phosphate + 2 H(+). It carries out the reaction L-glutamine + H2O = L-glutamate + NH4(+). It catalyses the reaction UTP + NH4(+) + ATP = CTP + ADP + phosphate + 2 H(+). It participates in pyrimidine metabolism; CTP biosynthesis via de novo pathway; CTP from UDP: step 2/2. Allosterically activated by GTP, when glutamine is the substrate; GTP has no effect on the reaction when ammonia is the substrate. The allosteric effector GTP functions by stabilizing the protein conformation that binds the tetrahedral intermediate(s) formed during glutamine hydrolysis. Inhibited by the product CTP, via allosteric rather than competitive inhibition. Functionally, catalyzes the ATP-dependent amination of UTP to CTP with either L-glutamine or ammonia as the source of nitrogen. Regulates intracellular CTP levels through interactions with the four ribonucleotide triphosphates. The protein is CTP synthase of Nitrosomonas eutropha (strain DSM 101675 / C91 / Nm57).